The chain runs to 940 residues: UvrABC system protein A (940 aa).

ATP is bound at residue 32–39; it reads GLSGSGKS. The C4-type zinc finger occupies 252–279; it reads CIDCGISIDEISPRLFSFNSPFGKCDYC. 2 consecutive ABC transporter domains span residues 309–589 and 609–937; these read WANT…EGSL and SNGK…HYLK. Residue 641–648 participates in ATP binding; that stretch reads GVSGSGKS. A C4-type zinc finger spans residues 740 to 766; the sequence is CEACKGDGIIKIEMQFLSDVYVPCEIC.

The protein belongs to the ABC transporter superfamily. UvrA family. As to quaternary structure, forms a heterotetramer with UvrB during the search for lesions.

The protein localises to the cytoplasm. Functionally, the UvrABC repair system catalyzes the recognition and processing of DNA lesions. UvrA is an ATPase and a DNA-binding protein. A damage recognition complex composed of 2 UvrA and 2 UvrB subunits scans DNA for abnormalities. When the presence of a lesion has been verified by UvrB, the UvrA molecules dissociate. In Clostridium tetani (strain Massachusetts / E88), this protein is UvrABC system protein A.